A 280-amino-acid polypeptide reads, in one-letter code: Fructose-1,6-bisphosphatase class 1 (280 aa).

4 residues coordinate Mg(2+): Glu-64, Asp-83, Leu-85, and Asp-86. Residues 86–89 (DGSS), Tyr-189, and Lys-220 each bind substrate. Residue Glu-226 participates in Mg(2+) binding.

This sequence belongs to the FBPase class 1 family. Homotetramer. Mg(2+) is required as a cofactor.

It localises to the cytoplasm. It carries out the reaction beta-D-fructose 1,6-bisphosphate + H2O = beta-D-fructose 6-phosphate + phosphate. It functions in the pathway carbohydrate biosynthesis; gluconeogenesis. This chain is Fructose-1,6-bisphosphatase class 1, found in Campylobacter jejuni (strain RM1221).